A 683-amino-acid chain; its full sequence is DNA-directed RNA polymerase subunit beta' (683 aa).

Residues C69, C71, C87, and C90 each coordinate Zn(2+). Residues D489, D491, and D493 each contribute to the Mg(2+) site.

The protein belongs to the RNA polymerase beta' chain family. RpoC1 subfamily. In terms of assembly, in plastids the minimal PEP RNA polymerase catalytic core is composed of four subunits: alpha, beta, beta', and beta''. When a (nuclear-encoded) sigma factor is associated with the core the holoenzyme is formed, which can initiate transcription. It depends on Mg(2+) as a cofactor. The cofactor is Zn(2+).

It localises to the plastid. It is found in the chloroplast. The enzyme catalyses RNA(n) + a ribonucleoside 5'-triphosphate = RNA(n+1) + diphosphate. Its function is as follows. DNA-dependent RNA polymerase catalyzes the transcription of DNA into RNA using the four ribonucleoside triphosphates as substrates. The polypeptide is DNA-directed RNA polymerase subunit beta' (Triticum aestivum (Wheat)).